Consider the following 449-residue polypeptide: tRNA(Ile)-lysidine synthase (449 aa).

Residue 35 to 40 (SGGIDS) participates in ATP binding.

The protein belongs to the tRNA(Ile)-lysidine synthase family.

The protein resides in the cytoplasm. The enzyme catalyses cytidine(34) in tRNA(Ile2) + L-lysine + ATP = lysidine(34) in tRNA(Ile2) + AMP + diphosphate + H(+). In terms of biological role, ligates lysine onto the cytidine present at position 34 of the AUA codon-specific tRNA(Ile) that contains the anticodon CAU, in an ATP-dependent manner. Cytidine is converted to lysidine, thus changing the amino acid specificity of the tRNA from methionine to isoleucine. In Coxiella burnetii (strain RSA 493 / Nine Mile phase I), this protein is tRNA(Ile)-lysidine synthase.